The following is a 348-amino-acid chain: GTP 3',8-cyclase (348 aa).

Residues 24–248 enclose the Radical SAM core domain; that stretch reads PFGRAVTYLR…TDIDYQTGGP (225 aa). Position 33 (R33) interacts with GTP. Positions 40 and 44 each coordinate [4Fe-4S] cluster. Y46 contributes to the S-adenosyl-L-methionine binding site. C47 serves as a coordination point for [4Fe-4S] cluster. R82 contacts GTP. G86 contacts S-adenosyl-L-methionine. Position 115 (T115) interacts with GTP. Residue S139 coordinates S-adenosyl-L-methionine. K175 contacts GTP. Residue M209 coordinates S-adenosyl-L-methionine. C272 and C275 together coordinate [4Fe-4S] cluster. 277–279 is a binding site for GTP; sequence RVR. C289 lines the [4Fe-4S] cluster pocket.

Belongs to the radical SAM superfamily. MoaA family. In terms of assembly, monomer and homodimer. The cofactor is [4Fe-4S] cluster.

The catalysed reaction is GTP + AH2 + S-adenosyl-L-methionine = (8S)-3',8-cyclo-7,8-dihydroguanosine 5'-triphosphate + 5'-deoxyadenosine + L-methionine + A + H(+). Its pathway is cofactor biosynthesis; molybdopterin biosynthesis. In terms of biological role, catalyzes the cyclization of GTP to (8S)-3',8-cyclo-7,8-dihydroguanosine 5'-triphosphate. This chain is GTP 3',8-cyclase, found in Rhizobium etli (strain ATCC 51251 / DSM 11541 / JCM 21823 / NBRC 15573 / CFN 42).